The sequence spans 587 residues: uncharacterized protein (587 aa).

Residues 1–21 (MANRLLIYGLILWVSIIGSFA) form the signal peptide. Topologically, residues 22 to 541 (LDRNKTAQNA…LEKEVSFQRR (520 aa)) are lumenal. A glycan (N-linked (GlcNAc...) asparagine) is linked at asparagine 25. The disordered stretch occupies residues 44 to 108 (GSTTNVQKEH…RNPGDSSNSF (65 aa)). Over residues 63 to 90 (RTHDFRQASKVDIRQADIRENGERKEQD) the composition is skewed to basic and acidic residues. The segment covering 91–108 (ALTQPATPRNPGDSSNSF) has biased composition (polar residues). The 169-residue stretch at 163 to 331 (NEWSEREENQ…SLIKVYGKSM (169 aa)) folds into the SUN domain. N-linked (GlcNAc...) asparagine glycans are attached at residues asparagine 378, asparagine 381, asparagine 408, asparagine 448, and asparagine 486. The helical transmembrane segment at 542–562 (IVYASFFAFVGLISYLLITRE) threads the bilayer. Residues 563 to 587 (LYFEDFEESKNGAIEKADIVQQAIR) lie on the Cytoplasmic side of the membrane.

Belongs to the SLP1 family. Interacts with EMP65.

Its subcellular location is the endoplasmic reticulum membrane. Its function is as follows. May be involved in membrane protein folding. Required for localization of MPS3 to the nuclear envelope. This is an uncharacterized protein from Saccharomyces cerevisiae (strain ATCC 204508 / S288c) (Baker's yeast).